The primary structure comprises 431 residues: Enolase (431 aa).

A (2R)-2-phosphoglycerate-binding site is contributed by Q166. The active-site Proton donor is the E208. The Mg(2+) site is built by D245, E288, and D315. Positions 340, 369, 370, and 391 each coordinate (2R)-2-phosphoglycerate. The active-site Proton acceptor is K340.

This sequence belongs to the enolase family. Mg(2+) serves as cofactor.

It localises to the cytoplasm. Its subcellular location is the secreted. The protein localises to the cell surface. The catalysed reaction is (2R)-2-phosphoglycerate = phosphoenolpyruvate + H2O. The protein operates within carbohydrate degradation; glycolysis; pyruvate from D-glyceraldehyde 3-phosphate: step 4/5. Its function is as follows. Catalyzes the reversible conversion of 2-phosphoglycerate (2-PG) into phosphoenolpyruvate (PEP). It is essential for the degradation of carbohydrates via glycolysis. The sequence is that of Enolase from Clostridium botulinum (strain Loch Maree / Type A3).